The chain runs to 1148 residues: Trafficking protein particle complex subunit 9 (1148 aa).

Phosphoserine occurs at positions 566 and 953.

This sequence belongs to the NIBP family. Component of the multisubunit TRAPP (transport protein particle) complex, which includes at least TRAPPC2, TRAPPC2L, TRAPPC3, TRAPPC3L, TRAPPC4, TRAPPC5, TRAPPC8, TRAPPC9, TRAPPC10, TRAPPC11 and TRAPPC12. Directly interacts with IKBKB and MAP3K14. Expressed at high levels in muscle and kidney and to a lower extent in brain, heart and placenta.

The protein localises to the golgi apparatus. The protein resides in the cis-Golgi network. It localises to the endoplasmic reticulum. Its subcellular location is the cytoplasm. Functionally, functions as an activator of NF-kappa-B through increased phosphorylation of the IKK complex. May function in neuronal cells differentiation. May play a role in vesicular transport from endoplasmic reticulum to Golgi. The chain is Trafficking protein particle complex subunit 9 (TRAPPC9) from Homo sapiens (Human).